Reading from the N-terminus, the 386-residue chain is Putative F-box/kelch-repeat protein At3g17280 (386 aa).

The 48-residue stretch at 1-48 (MTTISDLPYDLLPEILSRLPTKSIPKLKTTCKKWYALFKDPKFVEKKL) folds into the F-box domain. 2 Kelch repeats span residues 155–203 (SYKI…LKES) and 340–386 (RIYI…IVEV).

The protein is Putative F-box/kelch-repeat protein At3g17280 of Arabidopsis thaliana (Mouse-ear cress).